A 240-amino-acid chain; its full sequence is Heme oxygenase 1 (240 aa).

Heme b-binding residues include Arg-10, His-17, Tyr-125, Lys-168, and Arg-172.

It belongs to the heme oxygenase family.

The enzyme catalyses heme b + 3 reduced [NADPH--hemoprotein reductase] + 3 O2 = biliverdin IXalpha + CO + Fe(2+) + 3 oxidized [NADPH--hemoprotein reductase] + 3 H2O + H(+). In terms of biological role, catalyzes the opening of the heme ring with the release of iron. Key enzyme in the synthesis of the chromophoric part of the photosynthetic antennae. This is Heme oxygenase 1 (pbsA1) from Synechocystis sp. (strain ATCC 27184 / PCC 6803 / Kazusa).